The sequence spans 207 residues: Peptidyl-tRNA hydrolase (207 aa).

Y14 provides a ligand contact to tRNA. H19 serves as the catalytic Proton acceptor. Residues Y64, N66, and N112 each coordinate tRNA.

This sequence belongs to the PTH family. In terms of assembly, monomer.

It localises to the cytoplasm. The catalysed reaction is an N-acyl-L-alpha-aminoacyl-tRNA + H2O = an N-acyl-L-amino acid + a tRNA + H(+). Its function is as follows. Hydrolyzes ribosome-free peptidyl-tRNAs (with 1 or more amino acids incorporated), which drop off the ribosome during protein synthesis, or as a result of ribosome stalling. In terms of biological role, catalyzes the release of premature peptidyl moieties from peptidyl-tRNA molecules trapped in stalled 50S ribosomal subunits, and thus maintains levels of free tRNAs and 50S ribosomes. This chain is Peptidyl-tRNA hydrolase, found in Rhodopseudomonas palustris (strain BisB5).